Consider the following 183-residue polypeptide: Small acidic protein (183 aa).

The interval 1–183 (MSAARESHPH…KMMFVKSSGS (183 aa)) is disordered. Lys13 is covalently cross-linked (Glycyl lysine isopeptide (Lys-Gly) (interchain with G-Cter in SUMO2)). Residues Ser15 and Ser17 each carry the phosphoserine modification. A compositionally biased stretch (basic and acidic residues) spans 48-78 (GKKEHTGRLVIGDHKSTSHFRTGEEDKKINE). Lys62 is covalently cross-linked (Glycyl lysine isopeptide (Lys-Gly) (interchain with G-Cter in SUMO2)). Ser63 carries the phosphoserine modification. Lys75 participates in a covalent cross-link: Glycyl lysine isopeptide (Lys-Gly) (interchain with G-Cter in SUMO2). Ser87, Ser127, and Ser147 each carry phosphoserine. The span at 106-149 (EVEDHDGEGDVAGDDDDNDDDSPDPESPDDSESDSESEKEESAE) shows a compositional bias: acidic residues. The span at 153-171 (AAEHPDEVEDPKNKKDAKS) shows a compositional bias: basic and acidic residues. Lys174 and Lys179 each carry N6-acetyllysine.

The protein belongs to the SMAP family.

The polypeptide is Small acidic protein (SMAP) (Pongo abelii (Sumatran orangutan)).